Reading from the N-terminus, the 501-residue chain is Beta-glucosidase 25 (501 aa).

The N-terminal stretch at 1 to 19 is a signal peptide; that stretch reads MSLLTLVHILVSFSACVEA. Gln-39 serves as a coordination point for a beta-D-glucoside. Asn-107 carries N-linked (GlcNAc...) asparagine glycosylation. A beta-D-glucoside contacts are provided by residues His-140 and 185–186; that span reads NE. The Proton donor role is filled by Glu-186. Cysteines 205 and 213 form a disulfide. Residues Tyr-329, Glu-402, Trp-452, 459–460, and Phe-468 contribute to the a beta-D-glucoside site; that span reads EW. Glu-402 (nucleophile) is an active-site residue. Asn-478 is a glycosylation site (N-linked (GlcNAc...) asparagine).

Belongs to the glycosyl hydrolase 1 family.

It catalyses the reaction Hydrolysis of terminal, non-reducing beta-D-glucosyl residues with release of beta-D-glucose.. This chain is Beta-glucosidase 25 (BGLU25), found in Oryza sativa subsp. japonica (Rice).